The primary structure comprises 357 residues: Guanine nucleotide-binding protein alpha-16 subunit (357 aa).

G2 is lipidated: N-myristoyl glycine. C3 is lipidated: S-palmitoyl cysteine. Positions 32 to 357 (RTIKLLLLGA…RDNLRTCGLY (326 aa)) constitute a G-alpha domain. A G1 motif region spans residues 35–48 (KLLLLGAGESGKST). Residues 40-47 (GAGESGKS), 175-181 (LRTRIKT), 200-204 (DVGGQ), 269-272 (NKKD), and A329 each bind GTP. Residues S47 and T181 each contribute to the Mg(2+) site. The segment at 173–181 (DILRTRIKT) is G2 motif. A G3 motif region spans residues 196 to 205 (FLVFDVGGQR). The G4 motif stretch occupies residues 265–272 (ILFLNKKD). A G5 motif region spans residues 327 to 332 (TCATDT).

This sequence belongs to the G-alpha family. In terms of assembly, g proteins are composed of 3 units; alpha, beta and gamma. The alpha chain contains the guanine nucleotide binding site.

Guanine nucleotide-binding proteins (G proteins) are involved as modulators or transducers in various transmembrane signaling systems. In the 1-cell embryo, probably together with goa-1, controls nuclear rotation and spindle elongation during mitosis. During the first embryonic cell divisons, plays a role in gpr-1/2 cortical localization and in the proper orientation of EMS blastomere mitotic spindle. The polypeptide is Guanine nucleotide-binding protein alpha-16 subunit (gpa-16) (Caenorhabditis elegans).